We begin with the raw amino-acid sequence, 249 residues long: MYILTNILSIISNDVPTPYALGFQDSATPNQEGILELHDNIMFYLLVILGLVSWMLYTITKTYSKNPLPYKYMKHGQFIEIIWTIFPAVVLLIIAFPSFILLYLCDEVISPAMTVKVIGYQWYWKYEYSDFVNSNGETVEFESYIIPDDLLEEGQLRLLDTDTSVVVPVDTHIRFIVTAADVIHDFAIPSLGIKVDANPGRLNQVSALIQREGVFYGMCSELCGTGHSQMPIKIEVVSLGKYLGWLNEQ.

Transmembrane regions (helical) follow at residues 40-60 (NIMFYLLVILGLVSWMLYTIT) and 81-101 (IIWTIFPAVVLLIIAFPSFIL). 6 residues coordinate Cu cation: His184, Cys219, Glu221, Cys223, His227, and Met230. Glu221 lines the Mg(2+) pocket.

This sequence belongs to the cytochrome c oxidase subunit 2 family. Component of the cytochrome c oxidase (complex IV, CIV), a multisubunit enzyme composed of a catalytic core of 3 subunits and several supernumerary subunits. The complex exists as a monomer or a dimer and forms supercomplexes (SCs) in the inner mitochondrial membrane with ubiquinol-cytochrome c oxidoreductase (cytochrome b-c1 complex, complex III, CIII). The cofactor is Cu cation.

Its subcellular location is the mitochondrion inner membrane. The enzyme catalyses 4 Fe(II)-[cytochrome c] + O2 + 8 H(+)(in) = 4 Fe(III)-[cytochrome c] + 2 H2O + 4 H(+)(out). Component of the cytochrome c oxidase, the last enzyme in the mitochondrial electron transport chain which drives oxidative phosphorylation. The respiratory chain contains 3 multisubunit complexes succinate dehydrogenase (complex II, CII), ubiquinol-cytochrome c oxidoreductase (cytochrome b-c1 complex, complex III, CIII) and cytochrome c oxidase (complex IV, CIV), that cooperate to transfer electrons derived from NADH and succinate to molecular oxygen, creating an electrochemical gradient over the inner membrane that drives transmembrane transport and the ATP synthase. Cytochrome c oxidase is the component of the respiratory chain that catalyzes the reduction of oxygen to water. Electrons originating from reduced cytochrome c in the intermembrane space (IMS) are transferred via the dinuclear copper A center (CU(A)) of subunit 2 and heme A of subunit 1 to the active site in subunit 1, a binuclear center (BNC) formed by heme A3 and copper B (CU(B)). The BNC reduces molecular oxygen to 2 water molecules using 4 electrons from cytochrome c in the IMS and 4 protons from the mitochondrial matrix. This Vanderwaltozyma polyspora (strain ATCC 22028 / DSM 70294 / BCRC 21397 / CBS 2163 / NBRC 10782 / NRRL Y-8283 / UCD 57-17) (Kluyveromyces polysporus) protein is Cytochrome c oxidase subunit 2 (COX2).